Reading from the N-terminus, the 318-residue chain is Ribosomal protein L11 methyltransferase (318 aa).

Residues T159, G180, D202, and N253 each contribute to the S-adenosyl-L-methionine site.

The protein belongs to the methyltransferase superfamily. PrmA family.

Its subcellular location is the cytoplasm. The enzyme catalyses L-lysyl-[protein] + 3 S-adenosyl-L-methionine = N(6),N(6),N(6)-trimethyl-L-lysyl-[protein] + 3 S-adenosyl-L-homocysteine + 3 H(+). In terms of biological role, methylates ribosomal protein L11. The polypeptide is Ribosomal protein L11 methyltransferase (Lachnospira eligens (strain ATCC 27750 / DSM 3376 / VPI C15-48 / C15-B4) (Eubacterium eligens)).